We begin with the raw amino-acid sequence, 187 residues long: Preprocaerulein clone PXC202 (187 aa).

Positions 1–9 are excised as a propeptide; it reads NDERRFADG. The tract at residues 1-21 is disordered; sequence NDERRFADGQQDYTGWMDFGR. Sulfotyrosine is present on Tyr-13. Phe-19 bears the Phenylalanine amide mark. A propeptide spanning residues 23 to 73 is cleaved from the precursor; it reads DDEDDVNERDVRGFGSFLGKALKAALKIGANALGGSPQQREANDERRFADG. Tyr-77 bears the Sulfotyrosine mark. Position 83 is a phenylalanine amide (Phe-83). A propeptide spanning residues 87–137 is cleaved from the precursor; the sequence is DDEDDVNERDVRGFGSFLGKALKAALKIGANALGGSLQQREVNDERRFADG. Tyr-141 is subject to Sulfotyrosine. Phe-147 bears the Phenylalanine amide mark. The propeptide occupies 151–152; the sequence is DG. Position 156 is a sulfotyrosine (Tyr-156). Residue Phe-162 is modified to Phenylalanine amide. Residues 166–187 constitute a propeptide that is removed on maturation; it reads DDEDDVHERDVRGFGSFLGKAL.

This sequence belongs to the gastrin/cholecystokinin family. As to expression, expressed by the skin glands.

It localises to the secreted. In terms of biological role, the pharmacological activities of caerulein are quite similar to the physiological activities of gastrin and related peptides. The protein is Preprocaerulein clone PXC202 of Xenopus laevis (African clawed frog).